A 255-amino-acid chain; its full sequence is Dehydrogenase/reductase SDR family member 11 (255 aa).

An N-terminal signal peptide occupies residues 1–23 (MERWTGRVALVTGASVGIGAAVA). Residues 13-18 (GASVGI), 38-39 (RS), Glu-44, 65-66 (DL), and Asn-92 contribute to the NADP(+) site. Positions 146 and 161 each coordinate substrate. NADP(+) contacts are provided by residues Tyr-161, Lys-165, 196–199 (VETG), and Lys-203. The active-site Proton acceptor is Tyr-161.

The protein belongs to the short-chain dehydrogenases/reductases (SDR) family.

Its subcellular location is the secreted. It catalyses the reaction a 3beta-hydroxysteroid + NADP(+) = a 3-oxosteroid + NADPH + H(+). The catalysed reaction is 17beta-estradiol + NAD(+) = estrone + NADH + H(+). The enzyme catalyses 17beta-estradiol + NADP(+) = estrone + NADPH + H(+). Its pathway is steroid biosynthesis; estrogen biosynthesis. With respect to regulation, inhibited by flavonoids including apigenin, luteolin, genistein, kaempferol and quercetin and also by carbenoxolone, zearalenone, glycyrrhetinic, curcumin and flufenamic acid. Its function is as follows. Catalyzes the conversion of the 17-keto group of estrone, 4- and 5-androstenes and 5-alpha-androstanes into their 17-beta-hydroxyl metabolites and the conversion of the 3-keto group of 3-, 3,17- and 3,20- diketosteroids into their 3-hydroxyl metabolites. Exhibits reductive 3-beta-hydroxysteroid dehydrogenase activity toward 5-beta-androstanes, 5-beta-pregnanes, 4-pregnenes and bile acids. May also reduce endogenous and exogenous alpha-dicarbonyl compounds and xenobiotic alicyclic ketones. This is Dehydrogenase/reductase SDR family member 11 (DHRS11) from Gallus gallus (Chicken).